Consider the following 297-residue polypeptide: Syntaxin-4 (297 aa).

A compositionally biased stretch (basic and acidic residues) spans 1 to 12 (MRDRTHELRQGD). A disordered region spans residues 1 to 21 (MRDRTHELRQGDDSSDDEDKE). At 1–275 (MRDRTHELRQ…QKKARKKKVF (275 aa)) the chain is on the cytoplasmic side. 2 positions are modified to phosphoserine: Ser-14 and Ser-15. The residue at position 31 (Thr-31) is a Phosphothreonine. 4 positions are modified to phosphoserine: Ser-36, Ser-117, Ser-208, and Ser-248. Residues 43 to 163 (QKVRTIRQTI…ERIRRQLKIT (121 aa)) adopt a coiled-coil conformation. Residues 200–262 (LNEISARHSE…ERGQEHVKVA (63 aa)) enclose the t-SNARE coiled-coil homology domain. The helical; Anchor for type IV membrane protein transmembrane segment at 276 to 296 (IAICLSITVLILVVIIVISTL) threads the bilayer. Val-297 is a topological domain (extracellular).

Belongs to the syntaxin family. Component of the SNARE complex composed of STX4, SNAP23 and VAMP7 that interacts with SYT7 during lysosomal exocytosis. Found in a complex with VAMP8 and SNAP23. Detected in a complex with SNAP23 and STXBP4. Interacts with VAMP2. Interacts with SNAP23 and SNAPIN. Interacts with LLGL1. Interacts (via C-terminus) with CENPF. Interacts with DOC2B. Interacts with STXBP6. Interacts with STXBP3; excludes interaction with DOC2B and SNAP25. Interacts with STXBP4; excludes interaction with VAMP2. Interacts with STXBP5L.

It is found in the cell membrane. It localises to the cell projection. The protein localises to the neuron projection. The protein resides in the stereocilium. Its function is as follows. Plasma membrane t-SNARE that mediates docking of transport vesicles. Necessary for the translocation of SLC2A4 from intracellular vesicles to the plasma membrane. In neurons, recruited at neurite tips to membrane domains rich in the phospholipid 1-oleoyl-2-palmitoyl-PC (OPPC) which promotes neurite tip surface expression of the dopamine transporter SLC6A3/DAT by facilitating fusion of SLC6A3-containing transport vesicles with the plasma membrane. Together with STXB3 and VAMP2, may also play a role in docking/fusion of intracellular GLUT4-containing vesicles with the cell surface in adipocytes and in docking of synaptic vesicles at presynaptic active zones. Required for normal hearing. The chain is Syntaxin-4 (STX4) from Bos taurus (Bovine).